Reading from the N-terminus, the 54-residue chain is Rubredoxin-1 (54 aa).

One can recognise a Rubredoxin-like domain in the interval 1–52 (MKKWECVVCGFIYDEAEGLPDEGIEPGTAWNNVPEDWVCPDCGVGKDDFEMV). Residues Cys-6, Cys-9, Cys-39, and Cys-42 each contribute to the Fe cation site.

The protein belongs to the rubredoxin family. Requires Fe(3+) as cofactor.

The protein resides in the cytoplasm. It participates in hydrocarbon metabolism; alkane degradation. In terms of biological role, involved in the hydrocarbon hydroxylating system, which transfers electrons from NADH to rubredoxin reductase and then through rubredoxin to alkane 1 monooxygenase. The chain is Rubredoxin-1 (rubA) from Alcanivorax borkumensis (strain ATCC 700651 / DSM 11573 / NCIMB 13689 / SK2).